The following is a 979-amino-acid chain: MNNEKVRIYELSKELDLENKDILEFCGQLSIDVKSHSSTITTEEADKIRAIATQKRPQAPKAQRPQRKKKQEILSVQHQPQGAKPQASKSESADANHPTSTAKKLERPKLQSPPSRGKETPAQPEESPANNGAKAEPVAKTTSPKAEPAAPAAPKPKLMGPPPRPTPKSSAPKTPDASPATAETSSGATQADVRAKSLSKNTAEAPAKAPKLRPKPQIVGTVSKKPTPVQAIEPELDEEPDTNNVEGDDDATPEVLLAPPKRPAAKPKKAIGPKPSKRKVWEDEEEDESESKKTKTSKLKRRPVVIDDDDDDFGTTTNNNAEVPSVSLSIARPPKPKSASSSPSPSKPSPSKPKKPAAKRSGSGGSGQSQKEQRRDRPDVKTPPAEITLTETMTLREMADILCIAETDIIRRLFSKGIAINITQTLDYDTAQMVAEEFDVKVIAPEVKSAAEKSTEMLDVADLEHLQHRPPVVTIMGHVDHGKTTLLDSIRETKVAQGEAGGITQHIGAYHVDIEHNGKPGQIVFLDTPGHEAFTAMRARGAKVTDIAILVVAADDGVRPQTLEAIRHAQAAKVPIVVAINKMDKLGAEPDRVKQELSEQGLVPEEWGGETIMVPVSALKGENLDTLLEMILLVSEIEELSANPDRLARGTIIEAHLDRARGPVATLLVQNGTLRVGDIIVAGSVMGKIRAMISDRGEKVTDATPSFAVEILGLSEVPAAGDEFEVYSSEKEARAIADERAEGKRQSRLQQAMSSRRVSLSSLSAQAQEGELKELNLVLKADVQGSVEAILGSLQQLPQDEVQIRVLLSAPGEISETDVDLAAASGAIIIGFNTTLAPGARQAAEQEGVDIREYNVIYRFLEEIQGAMEGLLDPEEVEEPLGRAEVRAVFPVGRGSVAGCYVQSGKVVRNRMIRVRRGDVVVYDGSLDSLKRVREDVREVNSGYECGIGVDKFSTWKEGDIIEAYEMVFKRRTLAGRTS.

Residues 33–391 are disordered; it reads VKSHSSTITT…TPPAEITLTE (359 aa). Composition is skewed to low complexity over residues 54 to 63 and 139 to 150; these read QKRPQAPKAQ and AKTTSPKAEPAA. Residues 151-166 show a composition bias toward pro residues; the sequence is PAAPKPKLMGPPPRPT. The segment covering 234–252 has biased composition (acidic residues); the sequence is PELDEEPDTNNVEGDDDAT. Composition is skewed to basic residues over residues 263–278 and 294–303; these read PAAKPKKAIGPKPSKR and TKTSKLKRRP. The segment covering 314-328 has biased composition (polar residues); it reads GTTTNNNAEVPSVSL. Residues 371–380 show a composition bias toward basic and acidic residues; sequence KEQRRDRPDV. Residues 468–641 enclose the tr-type G domain; sequence HRPPVVTIMG…LLVSEIEELS (174 aa). A G1 region spans residues 477-484; that stretch reads GHVDHGKT. 477–484 is a binding site for GTP; sequence GHVDHGKT. The segment at 502–506 is G2; the sequence is GITQH. Residues 527-530 form a G3 region; it reads DTPG. GTP is bound by residues 527 to 531 and 581 to 584; these read DTPGH and NKMD. The segment at 581-584 is G4; that stretch reads NKMD. Residues 617–619 are G5; sequence SAL.

This sequence belongs to the TRAFAC class translation factor GTPase superfamily. Classic translation factor GTPase family. IF-2 subfamily.

It is found in the cytoplasm. One of the essential components for the initiation of protein synthesis. Protects formylmethionyl-tRNA from spontaneous hydrolysis and promotes its binding to the 30S ribosomal subunits. Also involved in the hydrolysis of GTP during the formation of the 70S ribosomal complex. This is Translation initiation factor IF-2 from Picosynechococcus sp. (strain ATCC 27264 / PCC 7002 / PR-6) (Agmenellum quadruplicatum).